Reading from the N-terminus, the 221-residue chain is Phosphoribosylformylglycinamidine synthase subunit PurQ (221 aa).

A Glutamine amidotransferase type-1 domain is found at 3-221 (AAVLVFPGSN…MFASLMQVMA (219 aa)). The active-site Nucleophile is the cysteine 87. Catalysis depends on residues histidine 195 and glutamate 197.

In terms of assembly, part of the FGAM synthase complex composed of 1 PurL, 1 PurQ and 2 PurS subunits.

The protein resides in the cytoplasm. The catalysed reaction is N(2)-formyl-N(1)-(5-phospho-beta-D-ribosyl)glycinamide + L-glutamine + ATP + H2O = 2-formamido-N(1)-(5-O-phospho-beta-D-ribosyl)acetamidine + L-glutamate + ADP + phosphate + H(+). It carries out the reaction L-glutamine + H2O = L-glutamate + NH4(+). The protein operates within purine metabolism; IMP biosynthesis via de novo pathway; 5-amino-1-(5-phospho-D-ribosyl)imidazole from N(2)-formyl-N(1)-(5-phospho-D-ribosyl)glycinamide: step 1/2. In terms of biological role, part of the phosphoribosylformylglycinamidine synthase complex involved in the purines biosynthetic pathway. Catalyzes the ATP-dependent conversion of formylglycinamide ribonucleotide (FGAR) and glutamine to yield formylglycinamidine ribonucleotide (FGAM) and glutamate. The FGAM synthase complex is composed of three subunits. PurQ produces an ammonia molecule by converting glutamine to glutamate. PurL transfers the ammonia molecule to FGAR to form FGAM in an ATP-dependent manner. PurS interacts with PurQ and PurL and is thought to assist in the transfer of the ammonia molecule from PurQ to PurL. The protein is Phosphoribosylformylglycinamidine synthase subunit PurQ of Zymomonas mobilis subsp. mobilis (strain ATCC 31821 / ZM4 / CP4).